A 175-amino-acid chain; its full sequence is Nucleoside triphosphate/diphosphate phosphatase (175 aa).

The Proton donor role is filled by Arg-23. Mg(2+)-binding residues include Asn-87, Asp-103, Asp-105, Asp-107, Asp-120, and Glu-123.

It belongs to the Ntdp family. It depends on Mg(2+) as a cofactor.

It carries out the reaction a ribonucleoside 5'-triphosphate + H2O = a ribonucleoside 5'-diphosphate + phosphate + H(+). The catalysed reaction is a ribonucleoside 5'-diphosphate + H2O = a ribonucleoside 5'-phosphate + phosphate + H(+). Has nucleoside phosphatase activity towards nucleoside triphosphates and nucleoside diphosphates. In Oceanobacillus iheyensis (strain DSM 14371 / CIP 107618 / JCM 11309 / KCTC 3954 / HTE831), this protein is Nucleoside triphosphate/diphosphate phosphatase.